A 118-amino-acid polypeptide reads, in one-letter code: Mu-like prophage FluMu tail tube protein (118 aa).

The disordered stretch occupies residues 12-32 (RLNGKEWPSDNDGTLTPGGKE).

The protein to phage Mu protein M.

This is Mu-like prophage FluMu tail tube protein from Haemophilus influenzae (strain ATCC 51907 / DSM 11121 / KW20 / Rd).